Here is a 276-residue protein sequence, read N- to C-terminus: NADH-cytochrome b5 reductase 2 (276 aa).

In terms of domain architecture, FAD-binding FR-type spans 15–127 (EAKYPLPLIE…RGPRGRLFYH (113 aa)). K17 is modified (N6-acetyllysine). A Phosphotyrosine modification is found at Y18. FAD contacts are provided by residues 107-137 (ENMKIGETIFFRGPRGRLFYHGPGNLGIRPD) and 146-181 (LADHLGMIAGGTGITPMLQLIRHITKDPSDRTRMSL).

Belongs to the flavoprotein pyridine nucleotide cytochrome reductase family. Requires FAD as cofactor. Restricted expression.

The catalysed reaction is 2 Fe(III)-[cytochrome b5] + NADH = 2 Fe(II)-[cytochrome b5] + NAD(+) + H(+). In terms of biological role, NADH-cytochrome b5 reductases are involved in desaturation and elongation of fatty acids, cholesterol biosynthesis, drug metabolism, and, in erythrocyte, methemoglobin reduction. Responsible for NADH-dependent lucigenin chemiluminescence in spermatozoa by reducing both lucigenin and 2-[4-iodophenyl]-3-[4-nitrophenyl]-5-[2,4-disulfophenyl]-2H tetrazolium monosodium salt (WST-1). The protein is NADH-cytochrome b5 reductase 2 of Homo sapiens (Human).